Here is a 271-residue protein sequence, read N- to C-terminus: Ribosomal RNA small subunit methyltransferase A (271 aa).

Residues His-11, Leu-13, Gly-38, Glu-58, Asp-86, and Asn-101 each contribute to the S-adenosyl-L-methionine site.

It belongs to the class I-like SAM-binding methyltransferase superfamily. rRNA adenine N(6)-methyltransferase family. RsmA subfamily.

The protein localises to the cytoplasm. The catalysed reaction is adenosine(1518)/adenosine(1519) in 16S rRNA + 4 S-adenosyl-L-methionine = N(6)-dimethyladenosine(1518)/N(6)-dimethyladenosine(1519) in 16S rRNA + 4 S-adenosyl-L-homocysteine + 4 H(+). Functionally, specifically dimethylates two adjacent adenosines (A1518 and A1519) in the loop of a conserved hairpin near the 3'-end of 16S rRNA in the 30S particle. May play a critical role in biogenesis of 30S subunits. The chain is Ribosomal RNA small subunit methyltransferase A from Helicobacter acinonychis (strain Sheeba).